The chain runs to 229 residues: Type III pantothenate kinase (229 aa).

Position 6 to 13 (6 to 13 (NIGNSRQH)) interacts with ATP. Substrate contacts are provided by residues Tyr77 and 81–84 (GIDR). The active-site Proton acceptor is the Asp83. Asp103 contacts K(+). Thr106 is an ATP binding site. Substrate is bound at residue Thr159.

It belongs to the type III pantothenate kinase family. In terms of assembly, homodimer. The cofactor is NH4(+). K(+) is required as a cofactor.

The protein resides in the cytoplasm. It carries out the reaction (R)-pantothenate + ATP = (R)-4'-phosphopantothenate + ADP + H(+). It participates in cofactor biosynthesis; coenzyme A biosynthesis; CoA from (R)-pantothenate: step 1/5. Its function is as follows. Catalyzes the phosphorylation of pantothenate (Pan), the first step in CoA biosynthesis. This is Type III pantothenate kinase from Gloeobacter violaceus (strain ATCC 29082 / PCC 7421).